A 428-amino-acid chain; its full sequence is Putative gustatory receptor 2a (428 aa).

Over 1–40 (MDTLRALEPLHRACQVCNLWPWRLAPPPDSEGILLRRSRW) the chain is Cytoplasmic. A helical membrane pass occupies residues 41 to 61 (LELYGWTVLIAATSFTVYGLF). Topologically, residues 62–145 (QESSVEEKQD…INMRRQTSRR (84 aa)) are extracellular. A helical membrane pass occupies residues 146 to 166 (AVWILWGYAVSQLLILGAKLL). The Cytoplasmic segment spans residues 167–173 (SRGDRFP). Residues 174–194 (IYWISYLLPLLVCGLRYFQIF) form a helical membrane-spanning segment. A glycan (N-linked (GlcNAc...) asparagine) is linked at asparagine 195. Over 195–250 (NATQLVRQRLDVLLVALQQLQLHQKGPAVDTVLEEQEDLEEAAMDRLIAVRLVYQR) the chain is Extracellular. A helical transmembrane segment spans residues 251–271 (VWALVALLNRCYGLSMLMQVG). At 272–300 (NDFLAITSNCYWMFLNFRQSAASPFDILQ) the chain is on the cytoplasmic side. Residues 301–321 (IVASGVWSAPHLGNVLVLSLL) traverse the membrane as a helical segment. Topologically, residues 322 to 349 (CDRTAQCASRLALCLHQVSVDLRNESHN) are extracellular. Residue asparagine 345 is glycosylated (N-linked (GlcNAc...) asparagine). The chain crosses the membrane as a helical span at residues 350–370 (ALVGTLVRYCAPLIILVPLQI). Topologically, residues 371–395 (TQFSLQLLHQRLHFSAAGFFNVDCT) are cytoplasmic. A helical transmembrane segment spans residues 396 to 416 (LLYTIVGATTTYLIILIQFHM). The Extracellular portion of the chain corresponds to 417–428 (SESTIGSDSNGQ).

It belongs to the insect chemoreceptor superfamily. Gustatory receptor (GR) family. Gr2a subfamily. In terms of tissue distribution, expressed in neurons of the terminal external chemosensory organ, the dorsal external chemosensory organ, as well as in the dorsal pharyngeal sense organ of larvae.

It localises to the cell membrane. Its function is as follows. Probable gustatory receptor which mediates acceptance or avoidance behavior, depending on its not yet determined substrates. The sequence is that of Putative gustatory receptor 2a (Gr2a) from Drosophila melanogaster (Fruit fly).